The sequence spans 125 residues: Small ribosomal subunit protein bS6 (125 aa).

The disordered stretch occupies residues 99–125 (ASPMVKAKDERRASAEVENNDFEDAEE). The segment covering 104-113 (KAKDERRASA) has biased composition (basic and acidic residues). Over residues 116 to 125 (ENNDFEDAEE) the composition is skewed to acidic residues.

The protein belongs to the bacterial ribosomal protein bS6 family.

Its function is as follows. Binds together with bS18 to 16S ribosomal RNA. In Mannheimia succiniciproducens (strain KCTC 0769BP / MBEL55E), this protein is Small ribosomal subunit protein bS6.